The primary structure comprises 148 residues: Large ribosomal subunit protein bL9 (148 aa).

This sequence belongs to the bacterial ribosomal protein bL9 family.

Its function is as follows. Binds to the 23S rRNA. This is Large ribosomal subunit protein bL9 from Bacillus cytotoxicus (strain DSM 22905 / CIP 110041 / 391-98 / NVH 391-98).